A 209-amino-acid chain; its full sequence is MSNVDINHARALVYQLLSSLFAREIDEQRLKQLTSEQAQQFWTQLGYAPEFSASVASIQKVLNGLTSDEALLELAADYCGLFLVGTKHSASPYASLYLNREEEPLLFGQQHQQMSEFLHQSKLQVQSHFPEPADHLAVILAYMGHLACHSEDAAQLSFLNACIDSWLAKFVAKVVECDSKHSNGFYSALATLTLAWVQQDKQQLEQAMH.

Belongs to the TorD/DmsD family. TorD subfamily.

The protein localises to the cytoplasm. Involved in the biogenesis of TorA. Acts on TorA before the insertion of the molybdenum cofactor and, as a result, probably favors a conformation of the apoenzyme that is competent for acquiring the cofactor. The chain is Chaperone protein TorD from Shewanella sp. (strain ANA-3).